Reading from the N-terminus, the 283-residue chain is Thymidylate synthase (283 aa).

Residue Arg22 participates in dUMP binding. The active-site Nucleophile is Cys160. DUMP-binding positions include 180–183 (RSCD), Asn191, and 221–223 (HIY). Asp183 contributes to the (6R)-5,10-methylene-5,6,7,8-tetrahydrofolate binding site. Ser282 is a binding site for (6R)-5,10-methylene-5,6,7,8-tetrahydrofolate.

It belongs to the thymidylate synthase family. Bacterial-type ThyA subfamily. Homodimer.

It is found in the cytoplasm. It catalyses the reaction dUMP + (6R)-5,10-methylene-5,6,7,8-tetrahydrofolate = 7,8-dihydrofolate + dTMP. Its pathway is pyrimidine metabolism; dTTP biosynthesis. Functionally, catalyzes the reductive methylation of 2'-deoxyuridine-5'-monophosphate (dUMP) to 2'-deoxythymidine-5'-monophosphate (dTMP) while utilizing 5,10-methylenetetrahydrofolate (mTHF) as the methyl donor and reductant in the reaction, yielding dihydrofolate (DHF) as a by-product. This enzymatic reaction provides an intracellular de novo source of dTMP, an essential precursor for DNA biosynthesis. This chain is Thymidylate synthase, found in Actinobacillus succinogenes (strain ATCC 55618 / DSM 22257 / CCUG 43843 / 130Z).